Here is a 215-residue protein sequence, read N- to C-terminus: Putative O-methyltransferase MAB_1361c (215 aa).

S-adenosyl-L-methionine contacts are provided by residues Val42, Glu64, 66 to 67 (GT), Ser72, Asp90, and Val91. Asp138 is a substrate binding site.

It belongs to the class I-like SAM-binding methyltransferase superfamily. Cation-dependent O-methyltransferase family.

In Mycobacteroides abscessus (strain ATCC 19977 / DSM 44196 / CCUG 20993 / CIP 104536 / JCM 13569 / NCTC 13031 / TMC 1543 / L948) (Mycobacterium abscessus), this protein is Putative O-methyltransferase MAB_1361c.